Here is a 343-residue protein sequence, read N- to C-terminus: Protein RecA (343 aa).

Gly65–Thr72 lines the ATP pocket.

The protein belongs to the RecA family.

The protein localises to the cytoplasm. Functionally, can catalyze the hydrolysis of ATP in the presence of single-stranded DNA, the ATP-dependent uptake of single-stranded DNA by duplex DNA, and the ATP-dependent hybridization of homologous single-stranded DNAs. It interacts with LexA causing its activation and leading to its autocatalytic cleavage. This Xanthomonas campestris pv. campestris (strain 8004) protein is Protein RecA.